A 689-amino-acid polypeptide reads, in one-letter code: MQDIQLDKRLSELLSQAVTPHNAQPIMQALCQSLNEHNIRYYVDDAPSITDSEYDRLMQRLKQLEAEYPQFVAADSPTQRVGGMALAKFEQITHLKPMLSLDNAFDEADFSAFHKRVSDRVGEVSFCCEPKLDGLAVSILYRNGVLERAATRGDGTVGEDITENVKTIKSIPLKLRGDNYPELVEVRGEAFMPKAAFEALNERARLKDEKLFVNPRNAAAGSLRQLDSKITASRALSFYAYALGVVEPTSHELAKTHYEQLQQLKSWGLPVSSEIKVCDELSQVFAYYQDILTRRADLPFEIDGVVMKVNDIAQQQTLGFVAKSPRWAIAYKFPAQEEMTLLEGVDFQVGRTGAVTPVARLKPVFVGGVTVSNATLHNADEIARLGVMVGDTVIIRRAGDVIPQIVAIVPERRPEDAKAIAFPQHCPVCGSLVERLEGEAVARCSGGLFCEAQRKEAIKHFASRKALDIDGMGDKIVEQLIDKELVQSPADLFKLTASMMTMLDRMGIKSATNLALAIEAAKTTTLPRFLYALGIREVGETTAANLATHFGSLEALRVATIEQLIQVEDIGEVVAQHVAHFFAQPHNLEVIDALIAAGVNWPAIAAPSADEQPLKGQTWVLTGTLNQLNRNDAKAQLQALGAKVAGSVSKNTDCLVAGEAAGSKLAKAQELGVKVIGEDELLALLAANS.

NAD(+) is bound by residues 51-55, 100-101, and E129; these read DSEYD and SL. Residue K131 is the N6-AMP-lysine intermediate of the active site. NAD(+)-binding residues include R152, E189, K308, and K332. Zn(2+)-binding residues include C426, C429, C444, and C450. Positions 609-689 constitute a BRCT domain; the sequence is ADEQPLKGQT…ELLALLAANS (81 aa).

This sequence belongs to the NAD-dependent DNA ligase family. LigA subfamily. The cofactor is Mg(2+). Mn(2+) is required as a cofactor.

It carries out the reaction NAD(+) + (deoxyribonucleotide)n-3'-hydroxyl + 5'-phospho-(deoxyribonucleotide)m = (deoxyribonucleotide)n+m + AMP + beta-nicotinamide D-nucleotide.. In terms of biological role, DNA ligase that catalyzes the formation of phosphodiester linkages between 5'-phosphoryl and 3'-hydroxyl groups in double-stranded DNA using NAD as a coenzyme and as the energy source for the reaction. It is essential for DNA replication and repair of damaged DNA. The chain is DNA ligase from Shewanella sp. (strain ANA-3).